Consider the following 175-residue polypeptide: Sec-independent protein translocase protein TatB (175 aa).

A helical transmembrane segment spans residues 1 to 21 (MLDLGLTKMALIGVVALVVLG). Disordered stretches follow at residues 104–132 (GGALEDVGNAGNTSWPGSTPAAGAKRKNW) and 155–175 (SGAARVARHTPATMRRPTRFF).

Belongs to the TatB family. In terms of assembly, the Tat system comprises two distinct complexes: a TatABC complex, containing multiple copies of TatA, TatB and TatC subunits, and a separate TatA complex, containing only TatA subunits. Substrates initially bind to the TatABC complex, which probably triggers association of the separate TatA complex to form the active translocon.

It localises to the cell inner membrane. In terms of biological role, part of the twin-arginine translocation (Tat) system that transports large folded proteins containing a characteristic twin-arginine motif in their signal peptide across membranes. Together with TatC, TatB is part of a receptor directly interacting with Tat signal peptides. TatB may form an oligomeric binding site that transiently accommodates folded Tat precursor proteins before their translocation. The sequence is that of Sec-independent protein translocase protein TatB from Paraburkholderia xenovorans (strain LB400).